We begin with the raw amino-acid sequence, 292 residues long: [LysW]-aminoadipate kinase (292 aa).

2 residues coordinate substrate: arginine 89 and asparagine 193.

The protein belongs to the acetylglutamate kinase family. LysZ subfamily.

Its subcellular location is the cytoplasm. The enzyme catalyses [amino-group carrier protein]-C-terminal-N-(1,4-dicarboxybutan-1-yl)-L-glutamine + ATP = [amino-group carrier protein]-C-terminal-N-(1-carboxy-5-phosphooxy-5-oxopentan-1-yl)-L-glutamine + ADP. It participates in amino-acid biosynthesis; L-lysine biosynthesis via AAA pathway; L-lysine from L-alpha-aminoadipate (Thermus route): step 2/5. In terms of biological role, catalyzes the phosphorylation of LysW-gamma-alpha-aminoadipate. This chain is [LysW]-aminoadipate kinase, found in Deinococcus radiodurans (strain ATCC 13939 / DSM 20539 / JCM 16871 / CCUG 27074 / LMG 4051 / NBRC 15346 / NCIMB 9279 / VKM B-1422 / R1).